The following is a 438-amino-acid chain: Glutaryl-CoA dehydrogenase, mitochondrial (438 aa).

The N-terminal 44 residues, 1 to 44 (MALRGVYAQLLNRGPGLRVFRSWSSATAQTEKGEKTQSRSAKPS), are a transit peptide targeting the mitochondrion. Substrate is bound by residues 138–139 (RS) and S186. FAD is bound by residues 177 to 186 (FGLTEPNHGS), S186, and 212 to 214 (WIT). Position 240 is an N6-acetyllysine (K240). Residue 287–294 (FGCLNNAR) participates in substrate binding. FAD is bound by residues R319, Q330, and 387–391 (DMLGG). E414 serves as the catalytic Proton acceptor. G415 is a substrate binding site. Residues T416, 416–418 (THD), and F434 each bind FAD.

This sequence belongs to the acyl-CoA dehydrogenase family. As to quaternary structure, homotetramer. The cofactor is FAD.

Its subcellular location is the mitochondrion matrix. It carries out the reaction glutaryl-CoA + oxidized [electron-transfer flavoprotein] + 2 H(+) = (2E)-butenoyl-CoA + reduced [electron-transfer flavoprotein] + CO2. The protein operates within amino-acid metabolism; lysine degradation. Its pathway is amino-acid metabolism; tryptophan metabolism. Catalyzes the oxidative decarboxylation of glutaryl-CoA to crotonyl-CoA and CO(2) in the degradative pathway of L-lysine, L-hydroxylysine, and L-tryptophan metabolism. It uses electron transfer flavoprotein as its electron acceptor. The chain is Glutaryl-CoA dehydrogenase, mitochondrial (GCDH) from Bos taurus (Bovine).